The following is a 441-amino-acid chain: ATP-dependent protease ATPase subunit HslU (441 aa).

Residues I18, 60–65 (GVGKTE), D254, E319, and R391 each bind ATP.

The protein belongs to the ClpX chaperone family. HslU subfamily. A double ring-shaped homohexamer of HslV is capped on each side by a ring-shaped HslU homohexamer. The assembly of the HslU/HslV complex is dependent on binding of ATP.

Its subcellular location is the cytoplasm. ATPase subunit of a proteasome-like degradation complex; this subunit has chaperone activity. The binding of ATP and its subsequent hydrolysis by HslU are essential for unfolding of protein substrates subsequently hydrolyzed by HslV. HslU recognizes the N-terminal part of its protein substrates and unfolds these before they are guided to HslV for hydrolysis. The protein is ATP-dependent protease ATPase subunit HslU of Shewanella halifaxensis (strain HAW-EB4).